The sequence spans 20 residues: Citrate synthase (20 aa).

It belongs to the citrate synthase family. As to quaternary structure, homohexamer.

The catalysed reaction is oxaloacetate + acetyl-CoA + H2O = citrate + CoA + H(+). It functions in the pathway carbohydrate metabolism; tricarboxylic acid cycle; isocitrate from oxaloacetate: step 1/2. Allosterically inhibited by NADH. The protein is Citrate synthase (gltA) of Streptomyces hygroscopicus.